Reading from the N-terminus, the 384-residue chain is Spermidine/putrescine import ATP-binding protein PotA (384 aa).

Residues 6–238 form the ABC transporter domain; it reads IAFKNVSKVF…PINHFVATFI (233 aa). 40-47 serves as a coordination point for ATP; it reads GASGSGKS.

The protein belongs to the ABC transporter superfamily. Spermidine/putrescine importer (TC 3.A.1.11.1) family. The complex is composed of two ATP-binding proteins (PotA), two transmembrane proteins (PotB and PotC) and a solute-binding protein (PotD).

The protein localises to the cell membrane. It carries out the reaction ATP + H2O + polyamine-[polyamine-binding protein]Side 1 = ADP + phosphate + polyamineSide 2 + [polyamine-binding protein]Side 1.. Its function is as follows. Part of the ABC transporter complex PotABCD involved in spermidine/putrescine import. Responsible for energy coupling to the transport system. This is Spermidine/putrescine import ATP-binding protein PotA from Streptococcus agalactiae serotype Ia (strain ATCC 27591 / A909 / CDC SS700).